The primary structure comprises 261 residues: Type II restriction enzyme Sau96I (261 aa).

In terms of assembly, monomer.

It carries out the reaction Endonucleolytic cleavage of DNA to give specific double-stranded fragments with terminal 5'-phosphates.. A P subtype restriction enzyme that recognizes the double-stranded sequence 5'-GGNCC-3' and cleaves after G-1. The sequence is that of Type II restriction enzyme Sau96I from Staphylococcus aureus.